The following is a 319-amino-acid chain: L-lactate dehydrogenase (319 aa).

NAD(+)-binding positions include 10–11 (RV), Asp32, Arg37, Tyr62, and 76–77 (GV). Residues Gln79, Arg85, and 117 to 120 (NPVD) each bind substrate. NAD(+) contacts are provided by residues 115-117 (VTN) and Ser140. 145–148 (DTAR) is a binding site for substrate. Beta-D-fructose 1,6-bisphosphate contacts are provided by Arg150 and His165. The active-site Proton acceptor is His172. A Phosphotyrosine modification is found at Tyr217. Position 226 (Thr226) interacts with substrate.

This sequence belongs to the LDH/MDH superfamily. LDH family. As to quaternary structure, homotetramer.

It localises to the cytoplasm. It catalyses the reaction (S)-lactate + NAD(+) = pyruvate + NADH + H(+). Its pathway is fermentation; pyruvate fermentation to lactate; (S)-lactate from pyruvate: step 1/1. Its activity is regulated as follows. Allosterically activated by fructose 1,6-bisphosphate (FBP). Inactivated by Mn(2+), Co(2+), Cd(2+) and Zn(2+). Its function is as follows. Catalyzes the conversion of lactate to pyruvate. It is stereospecific for L(+)-lactate. The protein is L-lactate dehydrogenase of Thermotoga maritima (strain ATCC 43589 / DSM 3109 / JCM 10099 / NBRC 100826 / MSB8).